The chain runs to 606 residues: ATP-dependent rRNA helicase spb4 (606 aa).

A Q motif motif is present at residues 1–29 (MSFQSINIDKWLKNAVAAQGFKKMTPVQA). In terms of domain architecture, Helicase ATP-binding spans 32–213 (IPLFLKNKDL…KIAGLRNSVR (182 aa)). 45-52 (AVTGSGKT) contacts ATP. The short motif at 161–164 (DEAD) is the DEAD box element. The Helicase C-terminal domain occupies 246–400 (CMIHLLCTIE…ALDLSRLKVL (155 aa)). Residues 521–574 (KQKEVKEKRNTRREKRKSKKEFLKAQKNEASNNLKQEIVSKAGAQETENDDLID) are disordered. The stretch at 521–601 (KQKEVKEKRN…KSKKRKNQAS (81 aa)) forms a coiled coil. Positions 529-539 (RNTRREKRKSK) are enriched in basic residues.

This sequence belongs to the DEAD box helicase family. DDX55/SPB4 subfamily. In terms of assembly, component of pre-60S ribosomal complexes.

It localises to the nucleus. The protein resides in the nucleolus. It carries out the reaction ATP + H2O = ADP + phosphate + H(+). Functionally, ATP-binding RNA helicase involved in the biogenesis of 60S ribosomal subunits. Binds 90S pre-ribosomal particles and dissociates from pre-60S ribosomal particles after processing of 27SB pre-rRNA. Required for the normal formation of 18S rRNA through the processing of pre-rRNAs at sites A0, A1 and A2, and the normal formation of 25S and 5.8S rRNAs through the processing of pre-rRNAs at sites C1 and C2. The sequence is that of ATP-dependent rRNA helicase spb4 from Schizosaccharomyces pombe (strain 972 / ATCC 24843) (Fission yeast).